We begin with the raw amino-acid sequence, 215 residues long: UPF0056 membrane protein YhcE (215 aa).

Transmembrane regions (helical) follow at residues 14-34 (FFIG…FISM), 54-74 (VAII…LFGI), 81-101 (IAGG…KLGE), 120-140 (VVPL…TIVW), 147-167 (ISYL…CWGL), and 189-209 (IMGL…IKGI).

The protein belongs to the UPF0056 (MarC) family.

The protein localises to the cell membrane. This chain is UPF0056 membrane protein YhcE (ychE), found in Escherichia coli (strain K12).